The sequence spans 239 residues: 7-cyano-7-deazaguanine synthase (239 aa).

13-23 (LSGGLDSMVTA) lines the ATP pocket. Residues Cys193, Cys203, Cys206, and Cys209 each contribute to the Zn(2+) site.

It belongs to the QueC family. Zn(2+) is required as a cofactor.

The enzyme catalyses 7-carboxy-7-deazaguanine + NH4(+) + ATP = 7-cyano-7-deazaguanine + ADP + phosphate + H2O + H(+). The protein operates within purine metabolism; 7-cyano-7-deazaguanine biosynthesis. In terms of biological role, catalyzes the ATP-dependent conversion of 7-carboxy-7-deazaguanine (CDG) to 7-cyano-7-deazaguanine (preQ(0)). This is 7-cyano-7-deazaguanine synthase from Erythrobacter litoralis (strain HTCC2594).